The chain runs to 102 residues: Co-chaperonin GroES (102 aa).

The protein belongs to the GroES chaperonin family. In terms of assembly, heptamer of 7 subunits arranged in a ring. Interacts with the chaperonin GroEL.

It is found in the cytoplasm. Together with the chaperonin GroEL, plays an essential role in assisting protein folding. The GroEL-GroES system forms a nano-cage that allows encapsulation of the non-native substrate proteins and provides a physical environment optimized to promote and accelerate protein folding. GroES binds to the apical surface of the GroEL ring, thereby capping the opening of the GroEL channel. The chain is Co-chaperonin GroES from Anabaena sp. (strain L31).